We begin with the raw amino-acid sequence, 295 residues long: Lipase 2 (295 aa).

The first 31 residues, 1-31, serve as a signal peptide directing secretion; it reads MPKPALRRVMTATVAAVGTLALGLTDATAHA. Ser-48 serves as the catalytic Nucleophile. 3 disulfide bridges follow: Cys-65–Cys-89, Cys-138–Cys-152, and Cys-205–Cys-254. His-275 is an active-site residue.

This sequence belongs to the 'GDSL' lipolytic enzyme family. In terms of assembly, monomer.

It is found in the secreted. It carries out the reaction a triacylglycerol + H2O = a diacylglycerol + a fatty acid + H(+). With respect to regulation, strongly inhibited by Ag(+). The cations Ca(2+) and Mg(2+) do not significantly reduce the lipolytic activity of SCO7513, whereas high concentrations of Co(2+) and Cu(2+) partially inhibit it. Is not inhibited by DTT in vitro. Is resistant to PMSF inhibition, except in the presence of Ca(2+). In terms of biological role, catalyzes the hydrolysis of fatty acid esters with a preference for long chain fatty acids (C16-C18). The polypeptide is Lipase 2 (Streptomyces coelicolor (strain ATCC BAA-471 / A3(2) / M145)).